A 290-amino-acid chain; its full sequence is Pyridoxal kinase PdxY (290 aa).

Residues Ser-12 and 47–48 (TQ) each bind substrate. ATP contacts are provided by residues Asp-114, Glu-151, Lys-184, and 211 to 214 (RPLL). Residue Asp-225 coordinates substrate.

Belongs to the pyridoxine kinase family. PdxY subfamily. Homodimer. Mg(2+) is required as a cofactor.

The enzyme catalyses pyridoxal + ATP = pyridoxal 5'-phosphate + ADP + H(+). It participates in cofactor metabolism; pyridoxal 5'-phosphate salvage; pyridoxal 5'-phosphate from pyridoxal: step 1/1. In terms of biological role, pyridoxal kinase involved in the salvage pathway of pyridoxal 5'-phosphate (PLP). Catalyzes the phosphorylation of pyridoxal to PLP. The sequence is that of Pyridoxal kinase PdxY from Pseudomonas entomophila (strain L48).